A 147-amino-acid chain; its full sequence is Deoxyuridine 5'-triphosphate nucleotidohydrolase (147 aa).

Arg-24 lines the Mg(2+) pocket. DUTP is bound by residues 68 to 70 (PRS), 82 to 85 (GVID), Tyr-88, Gly-93, Ile-95, and Arg-111.

It belongs to the dUTPase family. Requires Mg(2+) as cofactor.

It catalyses the reaction dUTP + H2O = dUMP + diphosphate + H(+). This enzyme is involved in nucleotide metabolism: it produces dUMP, the immediate precursor of thymidine nucleotides and it decreases the intracellular concentration of dUTP so that uracil cannot be incorporated into DNA. The sequence is that of Deoxyuridine 5'-triphosphate nucleotidohydrolase (OPG046) from Bos taurus (Bovine).